The following is a 122-amino-acid chain: Secretion system apparatus protein SsaM (122 aa).

This chain is Secretion system apparatus protein SsaM (ssaM), found in Salmonella typhimurium (strain LT2 / SGSC1412 / ATCC 700720).